Here is a 381-residue protein sequence, read N- to C-terminus: Beta-lactamase CMY-2 (381 aa).

The signal sequence occupies residues 1-20 (MMKKSLCCALLLTASFSTFA). Ser-84 acts as the Acyl-ester intermediate in catalysis. The a beta-lactam site is built by Ser-84, Gln-140, Tyr-170, and Asn-172.

The protein belongs to the class-C beta-lactamase family.

It catalyses the reaction a beta-lactam + H2O = a substituted beta-amino acid. Its activity is regulated as follows. Inhibited by the beta-lactamase-blocking agents sulbactam, tazobactam, avibactam and 3-aminophenylboronic acid (APB). Class C beta-lactamase which confers resistance to penicillins and cephalosporins. Has nitrocefin-, cefoxitin- and cefoperazone-hydrolyzing activities. In Klebsiella pneumoniae, this protein is Beta-lactamase CMY-2.